We begin with the raw amino-acid sequence, 151 residues long: 4-hydroxybenzoyl-CoA thioesterase (151 aa).

Glu73 is a catalytic residue. Residue Phe100 to Arg102 coordinates substrate.

This sequence belongs to the thioesterase PaaI family. In terms of assembly, homotetramer.

It carries out the reaction 4-hydroxybenzoyl-CoA + H2O = 4-hydroxybenzoate + CoA + H(+). The protein operates within xenobiotic degradation; 4-chlorobenzoate degradation; 4-hydroxybenzoate from 4-chlorobenzoate: step 3/3. This chain is 4-hydroxybenzoyl-CoA thioesterase, found in Arthrobacter globiformis.